Consider the following 257-residue polypeptide: Phosphatidylglycerol--prolipoprotein diacylglyceryl transferase (257 aa).

7 helical membrane-spanning segments follow: residues 13–33 (IGPI…AIGG), 49–69 (FLLN…RLMF), 88–108 (IYEG…AGLY), 123–143 (FAVL…IFNQ), 152–172 (FAFG…ILLI), 185–202 (GYQF…RGLI), and 223–243 (IGFF…AYWM). An a 1,2-diacyl-sn-glycero-3-phospho-(1'-sn-glycerol)-binding site is contributed by Arg136.

This sequence belongs to the Lgt family.

Its subcellular location is the cell membrane. The catalysed reaction is L-cysteinyl-[prolipoprotein] + a 1,2-diacyl-sn-glycero-3-phospho-(1'-sn-glycerol) = an S-1,2-diacyl-sn-glyceryl-L-cysteinyl-[prolipoprotein] + sn-glycerol 1-phosphate + H(+). It functions in the pathway protein modification; lipoprotein biosynthesis (diacylglyceryl transfer). Its function is as follows. Catalyzes the transfer of the diacylglyceryl group from phosphatidylglycerol to the sulfhydryl group of the N-terminal cysteine of a prolipoprotein, the first step in the formation of mature lipoproteins. In Thermoanaerobacter pseudethanolicus (strain ATCC 33223 / 39E) (Clostridium thermohydrosulfuricum), this protein is Phosphatidylglycerol--prolipoprotein diacylglyceryl transferase.